We begin with the raw amino-acid sequence, 208 residues long: Uracil phosphoribosyltransferase (208 aa).

5-phospho-alpha-D-ribose 1-diphosphate-binding positions include R78, R103, and 130-138 (DPMLATGGS). Uracil contacts are provided by residues I193 and 198-200 (GDA). Residue D199 participates in 5-phospho-alpha-D-ribose 1-diphosphate binding.

Belongs to the UPRTase family. Mg(2+) serves as cofactor.

It carries out the reaction UMP + diphosphate = 5-phospho-alpha-D-ribose 1-diphosphate + uracil. It functions in the pathway pyrimidine metabolism; UMP biosynthesis via salvage pathway; UMP from uracil: step 1/1. Allosterically activated by GTP. Its function is as follows. Catalyzes the conversion of uracil and 5-phospho-alpha-D-ribose 1-diphosphate (PRPP) to UMP and diphosphate. This is Uracil phosphoribosyltransferase from Roseiflexus castenholzii (strain DSM 13941 / HLO8).